The sequence spans 509 residues: MGSRLHVQVIHGGPPLPYKDDIRAFGKEYAEQLDAQDPLRRFRDEFIIPSKKDLKRKTLFPNDGMYSCGHPICFANTSCACVHAAETEETSDEKCIYLCGNSLGLQPRSTRKYIDHYLRTWATKGVTGHFVPHDDQLLPPFVDVDEAGAKLMAPIVGALKSEVAVMGTLTANLHLLMASFYRPTPERNKIIIEGKAFPSDHYAVESQIRHHNLDPKDAMVLIEPEDLDRPILDTKYILRVIDENAHSTALILLPAIQFYTGQYFDIQRITAHAQSKGILVGWDCAHAAGNVDLRLHDWNVDFAAWCTYKYLNAGPGGMAALFVHERHGRVDIEQAASGKEAFHPRFSGWWGGDKQTRFLMNNHFVPQQGAAGFQLSNPSVLDMNAVVASLELFNQTSMAEIRKKSLNLTGYLEHLLLRDPQTENSEKRPFSIITPSNPAERGAQLSIRLQPGLLDRVLESLNEDAVIIDERKPDVIRVAPAPLYNTYAEVWRFAQLFHLACDKALCGRK.

Residues Leu169, Thr170, Phe197–Asp200, Asp283, His286, and Tyr308 each bind pyridoxal 5'-phosphate. The residue at position 309 (Lys309) is an N6-(pyridoxal phosphate)lysine. Pyridoxal 5'-phosphate is bound by residues Trp349 and Asn377.

Belongs to the kynureninase family. Homodimer. Requires pyridoxal 5'-phosphate as cofactor.

It localises to the cytoplasm. It catalyses the reaction L-kynurenine + H2O = anthranilate + L-alanine + H(+). The catalysed reaction is 3-hydroxy-L-kynurenine + H2O = 3-hydroxyanthranilate + L-alanine + H(+). It functions in the pathway amino-acid degradation; L-kynurenine degradation; L-alanine and anthranilate from L-kynurenine: step 1/1. It participates in cofactor biosynthesis; NAD(+) biosynthesis; quinolinate from L-kynurenine: step 2/3. Its function is as follows. Catalyzes the cleavage of L-kynurenine (L-Kyn) and L-3-hydroxykynurenine (L-3OHKyn) into anthranilic acid (AA) and 3-hydroxyanthranilic acid (3-OHAA), respectively. This is Kynureninase 1 (bna5-1) from Aspergillus fumigatus (strain CBS 144.89 / FGSC A1163 / CEA10) (Neosartorya fumigata).